Here is a 208-residue protein sequence, read N- to C-terminus: Uracil phosphoribosyltransferase (208 aa).

5-phospho-alpha-D-ribose 1-diphosphate-binding positions include Arg-78, Arg-103, and 130–138; that span reads DPMLATGGS. Uracil-binding positions include Ile-193 and 198–200; that span reads GDA. Asp-199 contacts 5-phospho-alpha-D-ribose 1-diphosphate.

The protein belongs to the UPRTase family. The cofactor is Mg(2+).

It catalyses the reaction UMP + diphosphate = 5-phospho-alpha-D-ribose 1-diphosphate + uracil. The protein operates within pyrimidine metabolism; UMP biosynthesis via salvage pathway; UMP from uracil: step 1/1. With respect to regulation, allosterically activated by GTP. Its function is as follows. Catalyzes the conversion of uracil and 5-phospho-alpha-D-ribose 1-diphosphate (PRPP) to UMP and diphosphate. In Sodalis glossinidius (strain morsitans), this protein is Uracil phosphoribosyltransferase.